The sequence spans 305 residues: Ornithine carbamoyltransferase (305 aa).

Carbamoyl phosphate-binding positions include 48–51, Arg99, and 126–129; these read STRT and HPCQ. Residues Asn157, Asp222, and 226–227 contribute to the L-ornithine site; that span reads SM. Carbamoyl phosphate contacts are provided by residues 262-263 and Arg290; that span reads CL.

It belongs to the aspartate/ornithine carbamoyltransferase superfamily. OTCase family.

It localises to the cytoplasm. The catalysed reaction is carbamoyl phosphate + L-ornithine = L-citrulline + phosphate + H(+). It participates in amino-acid biosynthesis; L-arginine biosynthesis; L-arginine from L-ornithine and carbamoyl phosphate: step 1/3. In terms of biological role, reversibly catalyzes the transfer of the carbamoyl group from carbamoyl phosphate (CP) to the N(epsilon) atom of ornithine (ORN) to produce L-citrulline. The polypeptide is Ornithine carbamoyltransferase (argF) (Methanocaldococcus jannaschii (strain ATCC 43067 / DSM 2661 / JAL-1 / JCM 10045 / NBRC 100440) (Methanococcus jannaschii)).